The following is a 509-amino-acid chain: Histidine ammonia-lyase (509 aa).

The segment at residues 144 to 146 (ASG) is a cross-link (5-imidazolinone (Ala-Gly)). Residue S145 is modified to 2,3-didehydroalanine (Ser).

The protein belongs to the PAL/histidase family. In terms of processing, contains an active site 4-methylidene-imidazol-5-one (MIO), which is formed autocatalytically by cyclization and dehydration of residues Ala-Ser-Gly.

Its subcellular location is the cytoplasm. The enzyme catalyses L-histidine = trans-urocanate + NH4(+). Its pathway is amino-acid degradation; L-histidine degradation into L-glutamate; N-formimidoyl-L-glutamate from L-histidine: step 1/3. This is Histidine ammonia-lyase from Rhodospirillum centenum (strain ATCC 51521 / SW).